The primary structure comprises 302 residues: Syntaxin-17 (302 aa).

Position 2 is an N-acetylserine (Ser-2). The Cytoplasmic segment spans residues 2–228; the sequence is SEDEEKVKLR…KNLGKAAKYK (227 aa). N6-acetyllysine is present on Lys-41. Positions 53–123 form a coiled coil; sequence EEHINAGRTV…EELKKQFNDE (71 aa). Tyr-157 carries the post-translational modification Phosphotyrosine; by ABL1. Residues 162–224 form the t-SNARE coiled-coil homology domain; sequence IPQDQNAAES…EEGTKNLGKA (63 aa). The helical transmembrane segment at 229 to 249 threads the bilayer; that stretch reads LAALPVAGALIGGMVGGPIGL. Residues 229–275 are necessary and sufficient for localization to autophagosome; that stretch reads LAALPVAGALIGGMVGGPIGLLAGFKVAGIAAALGGGVLGFTGGKLI. Topologically, residues 250–254 are lumenal; it reads LAGFK. A helical transmembrane segment spans residues 255 to 275; it reads VAGIAAALGGGVLGFTGGKLI. Residues 276–302 lie on the Cytoplasmic side of the membrane; that stretch reads QRKKQKMMEKLTSSCPDLPSQTDKKCS. The residue at position 289 (Ser-289) is a Phosphoserine. An Endoplasmic reticulum retention signal motif is present at residues 299-302; the sequence is KKCS.

This sequence belongs to the syntaxin family. As to quaternary structure, forms a SNARE complex composed of VAMP8, SNAP29 and STX17 involved in fusion of autophagosome with lysosome. Interacts with VAMP7 and VTI1B. Probably interacts with BET1, SCFD1 and SEC22B. Interacts with PTPN2 and ABL1; involved in STX17 phosphorylation. Interacts with COPB1. Interacts with TMED9 and TMED10; the interaction is direct. Interacts with ATG14. Interacts with RUBCNL/PACER; promoting targeting of RUBCNL/PACER to autophagosome. Interacts with VAMP8, SNAP29, VPS39 and VPS41; these interactions are increased in the absence of TMEM39A. Interacts with IRGM; promoting STX17 recruitment to autophagosomes. Interacts with ATG8 proteins GABARAP and MAP1LC3B. Interacts with RNF115; this interaction enhances STX17 stability which in turn promotes autophagosome maturation. Interacts with RAB39A (GTP-bound); the interaction promotes autophagosome-lysosome membrane fusion driven by STX17-SNAP29-VAMP8. Interacts with RAB39B; the interaction may promote a different fonction in autophagy as compared with RAB39A. In terms of assembly, (Microbial infection) The interactions with VAMP8, SNAP29 and VPS41 are decreased in presence of SARS coronavirus-2/SARS-CoV-2 ORF3A protein. Post-translationally, phosphorylated at Tyr-157 probably by ABL1. Dephosphorylation by PTPN2; regulates exit from the endoplasmic reticulum. In terms of processing, (Microbial infection) Cleaved by the L.pneumophila serine protease Lpg1137, impairing endoplasmic reticulum-mitochondria communication, leading to inhibit autophagy.

The protein resides in the endoplasmic reticulum membrane. It is found in the smooth endoplasmic reticulum membrane. The protein localises to the endoplasmic reticulum-Golgi intermediate compartment membrane. It localises to the cytoplasmic vesicle. Its subcellular location is the autophagosome membrane. The protein resides in the COPII-coated vesicle membrane. It is found in the cytoplasm. The protein localises to the cytosol. It localises to the mitochondrion membrane. Its subcellular location is the autolysosome membrane. Its function is as follows. SNAREs, soluble N-ethylmaleimide-sensitive factor-attachment protein receptors, are essential proteins for fusion of cellular membranes. SNAREs localized on opposing membranes assemble to form a trans-SNARE complex, an extended, parallel four alpha-helical bundle that drives membrane fusion. STX17 is a SNARE of the autophagosome involved in autophagy through the direct control of autophagosome membrane fusion with the lysosome membrane. May also play a role in the early secretory pathway where it may maintain the architecture of the endoplasmic reticulum-Golgi intermediate compartment/ERGIC and Golgi and/or regulate transport between the endoplasmic reticulum, the ERGIC and the Golgi. The chain is Syntaxin-17 from Homo sapiens (Human).